Here is a 182-residue protein sequence, read N- to C-terminus: tRNA-splicing endonuclease (182 aa).

Residues Tyr119, His127, and Lys158 contribute to the active site.

The protein belongs to the tRNA-intron endonuclease family. Archaeal short subfamily. Homotetramer; although the tetramer contains four active sites, only two participate in the cleavage. Therefore, it should be considered as a dimer of dimers.

The enzyme catalyses pretRNA = a 3'-half-tRNA molecule with a 5'-OH end + a 5'-half-tRNA molecule with a 2',3'-cyclic phosphate end + an intron with a 2',3'-cyclic phosphate and a 5'-hydroxyl terminus.. In terms of biological role, endonuclease that removes tRNA introns. Cleaves pre-tRNA at the 5'- and 3'-splice sites to release the intron. The products are an intron and two tRNA half-molecules bearing 2',3' cyclic phosphate and 5'-OH termini. Recognizes a pseudosymmetric substrate in which 2 bulged loops of 3 bases are separated by a stem of 4 bp. The sequence is that of tRNA-splicing endonuclease from Saccharolobus islandicus (strain L.S.2.15 / Lassen #1) (Sulfolobus islandicus).